The chain runs to 85 residues: Beta-mammal/insect toxin Lqhb1 (85 aa).

The signal sequence occupies residues 1–19 (MKIIIFLIVSSLMLIGVKT). The 63-residue stretch at 20–82 (DNGYLLNKAT…LWAYATNKCN (63 aa)) folds into the LCN-type CS-alpha/beta domain. 4 disulfides stabilise this stretch: C31-C81, C35-C56, C42-C63, and C46-C65.

Belongs to the long (4 C-C) scorpion toxin superfamily. Sodium channel inhibitor family. As to expression, expressed by the venom gland.

It is found in the secreted. Functionally, beta toxins bind voltage-independently at site-4 of sodium channels (Nav) and shift the voltage of activation toward more negative potentials thereby affecting sodium channel activation and promoting spontaneous and repetitive firing. Competes, with apparent high affinity, with anti-insect and anti-mammalian beta-toxins for binding to cockroach and rat brain synaptosomes, respectively. Also competes with an anti-mammalian alpha-toxin on binding to rat brain sodium channels. Has a weak effect on cardiac sodium channels and a marked effect on rat brain and skeletal muscle sodium channels. In Leiurus hebraeus (Hebrew deathstalker scorpion), this protein is Beta-mammal/insect toxin Lqhb1.